The sequence spans 233 residues: Segregation and condensation protein A (233 aa).

This sequence belongs to the ScpA family. As to quaternary structure, component of a cohesin-like complex composed of ScpA, ScpB and the Smc homodimer, in which ScpA and ScpB bind to the head domain of Smc. The presence of the three proteins is required for the association of the complex with DNA.

It localises to the cytoplasm. Functionally, participates in chromosomal partition during cell division. May act via the formation of a condensin-like complex containing Smc and ScpB that pull DNA away from mid-cell into both cell halves. This Streptococcus pyogenes serotype M1 protein is Segregation and condensation protein A.